The sequence spans 1146 residues: Reverse gyrase 1 (1146 aa).

Residues 1–38 (MIKAIFDTLCPNCGGEISAERLLKGLPCEKCLPEEVNR) form an RG N-terminal-type zinc finger. 4 residues coordinate Zn(2+): Cys10, Cys13, Cys28, and Cys31. Residues Gln79 and 96-103 (APTGVGKT) each bind ATP. Residues 83–240 (ARKVFLGRSF…RLKEKPNKSE (158 aa)) form the Helicase ATP-binding domain. Residues 197 to 200 (DDVD) carry the DEAD box motif. A Helicase C-terminal domain is found at 412-565 (HLLWALLSLR…FKKIEEVDLK (154 aa)). A topoisomerase I region spans residues 592–1146 (EHVKPVLVVV…KVNEFEKANV (555 aa)). The Toprim domain occupies 596 to 728 (PVLVVVESPN…NVERIEFHEV (133 aa)). Mg(2+)-binding residues include Glu602 and Asp697. The 399-residue stretch at 744–1142 (NENLVKAQLV…ELYKKVNEFE (399 aa)) folds into the Topo IA-type catalytic domain. The active-site O-(5'-phospho-DNA)-tyrosine intermediate is Tyr891.

This sequence in the N-terminal section; belongs to the DEAD box helicase family. DDVD subfamily. In the C-terminal section; belongs to the type IA topoisomerase family. Monomer. Zn(2+) is required as a cofactor. The cofactor is Mg(2+).

The protein resides in the cytoplasm. The catalysed reaction is ATP + H2O = ADP + phosphate + H(+). Its function is as follows. Modifies the topological state of DNA by introducing positive supercoils in an ATP-dependent process, increasing the linking number in steps of +1. Binds to single-stranded DNA, transiently cleaves and then rejoins the ends, introducing a positive supercoil in the process. The scissile phosphodiester is attacked by the catalytic tyrosine of the enzyme, resulting in the formation of a DNA-(5'-phosphotyrosyl)-enzyme intermediate. Probably involved in rewinding DNA strands in regions of the chromosome that have opened up to allow replication, transcription, DNA repair and/or for DNA protection. The protein is Reverse gyrase 1 of Aquifex aeolicus (strain VF5).